Here is a 549-residue protein sequence, read N- to C-terminus: Oxygen-dependent choline dehydrogenase (549 aa).

Position 4–33 (4–33 (DFVIIGSGSAGSAMAYRLSEDGRYSVIVIE)) interacts with FAD. The active-site Proton acceptor is the H465.

It belongs to the GMC oxidoreductase family. It depends on FAD as a cofactor.

It catalyses the reaction choline + A = betaine aldehyde + AH2. The enzyme catalyses betaine aldehyde + NAD(+) + H2O = glycine betaine + NADH + 2 H(+). The protein operates within amine and polyamine biosynthesis; betaine biosynthesis via choline pathway; betaine aldehyde from choline (cytochrome c reductase route): step 1/1. Its function is as follows. Involved in the biosynthesis of the osmoprotectant glycine betaine. Catalyzes the oxidation of choline to betaine aldehyde and betaine aldehyde to glycine betaine at the same rate. This Brucella melitensis biotype 1 (strain ATCC 23456 / CCUG 17765 / NCTC 10094 / 16M) protein is Oxygen-dependent choline dehydrogenase.